The sequence spans 560 residues: Formate--tetrahydrofolate ligase (560 aa).

70-77 (TPAGEGKT) serves as a coordination point for ATP.

It belongs to the formate--tetrahydrofolate ligase family.

It catalyses the reaction (6S)-5,6,7,8-tetrahydrofolate + formate + ATP = (6R)-10-formyltetrahydrofolate + ADP + phosphate. It participates in one-carbon metabolism; tetrahydrofolate interconversion. In Methanocorpusculum labreanum (strain ATCC 43576 / DSM 4855 / Z), this protein is Formate--tetrahydrofolate ligase.